A 229-amino-acid chain; its full sequence is uncharacterized protein (229 aa).

This is an uncharacterized protein from Dictyostelium discoideum (Social amoeba).